A 221-amino-acid chain; its full sequence is Ribosomal RNA small subunit methyltransferase Nep1 (221 aa).

Residues Gly174, Gly179, and 196–201 (LGEVAM) each bind S-adenosyl-L-methionine.

Belongs to the class IV-like SAM-binding methyltransferase superfamily. RNA methyltransferase NEP1 family. In terms of assembly, homodimer.

The catalysed reaction is a pseudouridine in rRNA + S-adenosyl-L-methionine = an N(1)-methylpseudouridine in rRNA + S-adenosyl-L-homocysteine + H(+). Its function is as follows. Methyltransferase involved in ribosomal biogenesis. Specifically catalyzes the N1-methylation of the pseudouridine corresponding to position 914 in M.jannaschii 16S rRNA. The chain is Ribosomal RNA small subunit methyltransferase Nep1 from Pyrobaculum arsenaticum (strain DSM 13514 / JCM 11321 / PZ6).